The following is a 314-amino-acid chain: DNA-directed RNA polymerase subunit alpha (314 aa).

Residues 1–228 (MIEIEKPKIE…EHLNIFVGLT (228 aa)) are alpha N-terminal domain (alpha-NTD). The segment at 246-314 (EKVLEMTIEE…ELGLGLRKDD (69 aa)) is alpha C-terminal domain (alpha-CTD).

The protein belongs to the RNA polymerase alpha chain family. Homodimer. The RNAP catalytic core consists of 2 alpha, 1 beta, 1 beta' and 1 omega subunit. When a sigma factor is associated with the core the holoenzyme is formed, which can initiate transcription.

The enzyme catalyses RNA(n) + a ribonucleoside 5'-triphosphate = RNA(n+1) + diphosphate. In terms of biological role, DNA-dependent RNA polymerase catalyzes the transcription of DNA into RNA using the four ribonucleoside triphosphates as substrates. This Bacillus cytotoxicus (strain DSM 22905 / CIP 110041 / 391-98 / NVH 391-98) protein is DNA-directed RNA polymerase subunit alpha.